The primary structure comprises 111 residues: uncharacterized protein (111 aa).

Residues 66-94 (PVPTATPSLPRSGFTSSAKKIKESRKQKS) form a disordered region. The span at 70–83 (ATPSLPRSGFTSSA) shows a compositional bias: polar residues.

The protein resides in the plastid. It localises to the chloroplast. This is an uncharacterized protein from Chlamydomonas reinhardtii (Chlamydomonas smithii).